The sequence spans 426 residues: Histidine--tRNA ligase (426 aa).

This sequence belongs to the class-II aminoacyl-tRNA synthetase family. As to quaternary structure, homodimer.

Its subcellular location is the cytoplasm. It carries out the reaction tRNA(His) + L-histidine + ATP = L-histidyl-tRNA(His) + AMP + diphosphate + H(+). In Streptococcus pyogenes serotype M49 (strain NZ131), this protein is Histidine--tRNA ligase.